A 248-amino-acid polypeptide reads, in one-letter code: Triosephosphate isomerase (248 aa).

N11 and K13 together coordinate substrate. H95 (electrophile) is an active-site residue. E165 acts as the Proton acceptor in catalysis.

The protein belongs to the triosephosphate isomerase family. Homodimer.

It localises to the cytoplasm. It catalyses the reaction dihydroxyacetone phosphate = methylglyoxal + phosphate. The catalysed reaction is D-glyceraldehyde 3-phosphate = dihydroxyacetone phosphate. The protein operates within carbohydrate degradation; glycolysis; D-glyceraldehyde 3-phosphate from glycerone phosphate: step 1/1. Its pathway is carbohydrate biosynthesis; gluconeogenesis. Functionally, triosephosphate isomerase is an extremely efficient metabolic enzyme that catalyzes the interconversion between dihydroxyacetone phosphate (DHAP) and D-glyceraldehyde-3-phosphate (G3P) in glycolysis and gluconeogenesis. In terms of biological role, it is also responsible for the non-negligible production of methylglyoxal a reactive cytotoxic side-product that modifies and can alter proteins, DNA and lipids. The sequence is that of Triosephosphate isomerase (TPI1) from Gallus gallus (Chicken).